Here is a 291-residue protein sequence, read N- to C-terminus: Nucleotide-binding protein lhv_0732 (291 aa).

Position 13 to 20 (13 to 20 (GMSGAGKT)) interacts with ATP. Residue 61–64 (DLRV) participates in GTP binding.

This sequence belongs to the RapZ-like family.

Displays ATPase and GTPase activities. This chain is Nucleotide-binding protein lhv_0732, found in Lactobacillus helveticus (strain DPC 4571).